The following is a 691-amino-acid chain: Elongation factor G (691 aa).

Positions 8-283 (EDYRNFGIMA…AVVDYLPSPA (276 aa)) constitute a tr-type G domain. GTP contacts are provided by residues 17-24 (AHIDAGKT), 81-85 (DTPGH), and 135-138 (NKMD).

The protein belongs to the TRAFAC class translation factor GTPase superfamily. Classic translation factor GTPase family. EF-G/EF-2 subfamily.

The protein resides in the cytoplasm. In terms of biological role, catalyzes the GTP-dependent ribosomal translocation step during translation elongation. During this step, the ribosome changes from the pre-translocational (PRE) to the post-translocational (POST) state as the newly formed A-site-bound peptidyl-tRNA and P-site-bound deacylated tRNA move to the P and E sites, respectively. Catalyzes the coordinated movement of the two tRNA molecules, the mRNA and conformational changes in the ribosome. This chain is Elongation factor G, found in Methylobacterium radiotolerans (strain ATCC 27329 / DSM 1819 / JCM 2831 / NBRC 15690 / NCIMB 10815 / 0-1).